A 72-amino-acid polypeptide reads, in one-letter code: uncharacterized protein (72 aa).

The signal sequence occupies residues 1–17; that stretch reads MSLGLAIAVGIVLGVVA.

This is an uncharacterized protein from Schizosaccharomyces pombe (strain 972 / ATCC 24843) (Fission yeast).